Here is a 253-residue protein sequence, read N- to C-terminus: Triosephosphate isomerase (253 aa).

9–11 (NWK) is a substrate binding site. The active-site Electrophile is histidine 97. The active-site Proton acceptor is the glutamate 169. Substrate contacts are provided by residues glycine 175, serine 215, and 236 to 237 (GG).

Belongs to the triosephosphate isomerase family. In terms of assembly, homodimer.

The protein localises to the cytoplasm. It catalyses the reaction D-glyceraldehyde 3-phosphate = dihydroxyacetone phosphate. Its pathway is carbohydrate biosynthesis; gluconeogenesis. The protein operates within carbohydrate degradation; glycolysis; D-glyceraldehyde 3-phosphate from glycerone phosphate: step 1/1. In terms of biological role, involved in the gluconeogenesis. Catalyzes stereospecifically the conversion of dihydroxyacetone phosphate (DHAP) to D-glyceraldehyde-3-phosphate (G3P). The polypeptide is Triosephosphate isomerase (Staphylococcus saprophyticus subsp. saprophyticus (strain ATCC 15305 / DSM 20229 / NCIMB 8711 / NCTC 7292 / S-41)).